Consider the following 2256-residue polypeptide: MDDKGHLSNEEAPKAIKPTSKEFRKTWGFRRTTIAKREGAGDTEVDPSEQQPQQHNLSLRRSGRQPKRTERVEEFLTTVRRRGKKNVPVSLEDSSEPTSSTVTDVETASEGSVESSSEIRSGPVSDSLGKEHPASSEKAKGGEEEEDTSDSDSDGLTLKELQNRLRRKREQEPVERSLRGSQNRLRKKRREEDSAETGSVQIGSAEQDRPLCKQEPEASQGPVSQSETDDIENQLEGKATQGNTEENPREAGKPKPECEVYDPNALYCICRQPHNNRFMICCDRCEEWFHGDCVGISEARGRLLERNGEDYICPNCTILQVQDETNGSATDEQDSGCRSVGADGTDCTSIGTVEQKSGEDQGIKGRIEKAANPSGKKKLKIFQPVVEAPGAPKCIGPGCSSVAQPDSVYCSNDCILKHAAATMRFLSSGKEQKTKPKEKVKTKPEKFSLPKCSVQVGIKISSVHKRLASEKRENPVKKVMLASRSETSGKEAACESSTPSWASDHNYNAVKPEKPEKPTALSPTLLSKSMKDDRRVEDRTMAAVTIPKKALPSASLVGRQTSPRNLVPKKLPPYSNMAGAKPAIKKLPSGFKGTIPKRPWPSATLSGTSARQAGPTPMTAASKKLPGSAAVVGVTRKPMSANVPAASPAPGRLGPVSPAPSQPNSQIRQNIRRSLKEILWKRVNDSDDLIMTENEVGKIALHIEKEMFNLFQVTDNRYKSKYRSIMFNLKDPKNQGLFHRVLREEISLAKLVRMKPEELVSKELSMWTEKPTKSVIESRTKLLNESKKNTTKPETIPDMEDSPPVSDSEEQQESVRAAPEKSAAPLLDVFSSMLKDTTSQHRAHLFDLNCKICTGQVPSSEDEPAPKKQKLSASSKKEDFKPRHDSSPPNAVPNTADEGIADTLPENASEPDPESTSSLNQERKCFPESPGDSHPEPSSLGGLSPSSASGGSGVVTTVTMSGRDPRTALSGSCTVTASMAAHLDNSQASETKLDMIKPALTSAVVPKSILAKPSSSPDPRYLSVPPSPSISESRSPPEGDTTLFLSRLNTIWKGFINMQSVAKFVTKAYPVSGCLDYLSEDLPDTIHIGGRIAPKTVWDYVGKLKSSVSKELCLIRFHPATEEEEVAYISLYSYFSSRGRFGVVANNNRHVKDLYLIPLSAKDPVPSKLLPFEGPGLESPRPNIILGLVICQKVKRPSSAGELDKTDEKRTRLQQEELETSVYPKVTAALPSEKKPPKYSVHSIDTAATSTTPPGSPPPPPPLPEPPVLKILSSLKPGSTSTVTAPTTAAITTTASPVTAATSKTASPLEHILQTLFGKKKSFEPSGKESVGSTLSPHQDSKAKGEDTMSAAPLLDPIVQQFGQFSKDKALEEEEEDDRPYDPEEEYNPDRAFHTLLAEPGRPHDVQSVSETAEREEVAYDPEDETILEEAKVTIDDLPNRMCMKVSATERPADFTTDASSASLVEQQKMLEELNKQIEEQKRQLEEQEEALRQQRAAVGVSMAHFSVSDALMSPPPKSSLGKTELFSQEQQAPDPSQGAPNTNHNLDSRQSRDPRQARRLAAENTENESLPRAPTGSTPGPQGTLPARETPAGTAVVQGPGLAAEAKESMAVPWAPGENAVLRPEHDIQKCEHPGNPVSLPLDTSHLPTAGDGAARPAPPRRVLLPTPPSTTFPPSFPLQPKAQNFSSGSREPFSGPTFMSQETSLGSSQYEDPRGAQSAGKNDSPVADMEDSREPQPRPGESTTSFPQPGQRGGGPQPQFPGQREPAPRTFGMSGHHGPSFPGPRGPVPPYSEENLVPNSDGPRGPPPARFGAQKPPIPSLFSGQHGPPPYGDNRGLSPSYLGGPRGGAPAQFEDRKDPHGEKREFQDTPYNEMTGAPAQCEGPDQAQFMGNRAPFQFGGQRRPLLTQMKGPRGGPPPSQFGAQRGPPPGHFVGPRGPHPSQFENSRGTHPGQFEGARGQAPGFMPGPRGIQPQQFEEQRVNSPPRFAGQRASAPLPYGGPRGPAPFPEKNEQPPSRFHFQGPSSQPVKPPPRPLLELPSHPPQHRKDRWDEAGPATALPSSAGPGQGHEADGQWATSEFREGKGHEYRSPAFEGRQRERFEAGSKEKPLDEPEAQGLESRQGRAFEDRRRERERGRNWSRERDWERSRDWDRHREWDKGRDRSSNRDRERDNDRAKEWDRSRERSRNRDRDRERRRDRDRSRSRDRDRDRERARDRDRDRGRDRKDRSKSRESPRDQKPEARTSEGGPAAAQA.

Methionine 1 is modified (N-acetylmethionine). Residues 1-25 are compositionally biased toward basic and acidic residues; sequence MDDKGHLSNEEAPKAIKPTSKEFRK. Residues 1–256 are disordered; the sequence is MDDKGHLSNE…NPREAGKPKP (256 aa). Composition is skewed to polar residues over residues 48 to 59 and 96 to 119; these read SEQQPQQHNLSL and EPTS…SSEI. Serine 58 and serine 112 each carry phosphoserine. Residues 128–142 are compositionally biased toward basic and acidic residues; it reads LGKEHPASSEKAKGG. The segment covering 143–153 has biased composition (acidic residues); the sequence is EEEEDTSDSDS. At threonine 148 the chain carries Phosphothreonine. Phosphoserine is present on residues serine 149 and serine 151. Short sequence motifs (nuclear localization signal) lie at residues 162-170 and 182-190; these read QNRLRRKRE and QNRLRKKRR. The span at 169–178 shows a compositional bias: basic and acidic residues; it reads REQEPVERSL. Basic and acidic residues-rich tracts occupy residues 206–216 and 246–256; these read EQDRPLCKQEP and ENPREAGKPKP. The PHD-type zinc finger occupies 265-319; it reads ALYCICRQPHNNRFMICCDRCEEWFHGDCVGISEARGRLLERNGEDYICPNCTIL. 7 disordered regions span residues 481–535, 598–624, 641–668, 778–822, 856–970, 1011–1039, and 1197–1218; these read LASR…DDRR, RPWP…ASKK, ANVP…SQIR, SRTK…PEKS, QVPS…TALS, AKPS…PPEG, and PSSA…QEEL. Over residues 495–506 the composition is skewed to polar residues; that stretch reads ESSTPSWASDHN. Residue serine 522 is modified to Phosphoserine. Positions 667-787 constitute a TFIIS central domain; it reads IRQNIRRSLK…SRTKLLNESK (121 aa). The segment covering 778–788 has biased composition (basic and acidic residues); it reads SRTKLLNESKK. Acidic residues predominate over residues 797–812; that stretch reads PDMEDSPPVSDSEEQQ. 2 positions are modified to phosphoserine: serine 802 and serine 806. Basic and acidic residues-rich tracts occupy residues 875-886 and 921-935; these read SKKEDFKPRHDS and QERK…DSHP. Residue lysine 876 forms a Glycyl lysine isopeptide (Lys-Gly) (interchain with G-Cter in SUMO2) linkage. Serine 886 bears the Phosphoserine mark. The span at 937-962 shows a compositional bias: low complexity; sequence PSSLGGLSPSSASGGSGVVTTVTMSG. Serine 1016, serine 1027, and serine 1035 each carry phosphoserine. Basic and acidic residues predominate over residues 1202-1215; the sequence is ELDKTDEKRTRLQQ. The residue at position 1239 (tyrosine 1239) is a Phosphotyrosine. The disordered stretch occupies residues 1245–1288; the sequence is DTAATSTTPPGSPPPPPPLPEPPVLKILSSLKPGSTSTVTAPTT. The residue at position 1252 (threonine 1252) is a Phosphothreonine. Positions 1254–1267 are enriched in pro residues; the sequence is PGSPPPPPPLPEPP. Serine 1256 carries the phosphoserine modification. The span at 1279 to 1288 shows a compositional bias: low complexity; the sequence is STSTVTAPTT. Serine 1307 bears the Phosphoserine mark. Disordered regions lie at residues 1320–1347, 1362–1421, 1509–1609, and 1630–2256; these read KKSF…KGED, FGQF…VAYD, SDAL…EAKE, and QKCE…AAQA. The segment covering 1371–1387 has biased composition (acidic residues); sequence LEEEEEDDRPYDPEEEY. Serine 1514 carries the post-translational modification Phosphoserine. A compositionally biased stretch (polar residues) spans 1526 to 1546; it reads LFSQEQQAPDPSQGAPNTNHN. Basic and acidic residues predominate over residues 1547–1557; it reads LDSRQSRDPRQ. The segment covering 1649-1666 has biased composition (low complexity); it reads PTAGDGAARPAPPRRVLL. The segment covering 1667-1679 has biased composition (pro residues); sequence PTPPSTTFPPSFP. Residues 1699–1712 show a composition bias toward polar residues; sequence TFMSQETSLGSSQY. Serine 1726 carries the post-translational modification Phosphoserine. Positions 1783–1792 are enriched in pro residues; the sequence is FPGPRGPVPP. Arginine 1848 carries the omega-N-methylarginine modification. Over residues 1855–1869 the composition is skewed to basic and acidic residues; sequence FEDRKDPHGEKREFQ. Asymmetric dimethylarginine is present on residues arginine 1904, arginine 1905, arginine 1988, arginine 1993, arginine 2004, arginine 2019, and arginine 2035. Composition is skewed to basic and acidic residues over residues 2081–2113 and 2123–2246; these read EFRE…KPLD and RQGR…EART.

As to quaternary structure, interacts specifically (via PHD-type zinc finger) with histone H3 that is trimethylated at 'Lys-4' (H3K4me3), histone phosphorylation at 'Thr-3' or 'Thr-6' disrupts this binding and promotes translocation of DIDO1 from chromatin to the mitotic spindle during mitosis. As to expression, ubiquitous. Expressed at intermediate levels.

The protein resides in the cytoplasm. Its subcellular location is the nucleus. The protein localises to the cytoskeleton. It is found in the spindle. Required for early embryonic stem cell development. Putative transcription factor, weakly pro-apoptotic when overexpressed. This is Death-inducer obliterator 1 (Dido1) from Mus musculus (Mouse).